The sequence spans 108 residues: N(4)-acetylcytidine amidohydrolase (108 aa).

The region spanning 5–102 (ITFFQRLERS…NDLFFISFRV (98 aa)) is the ASCH domain. The Proton acceptor role is filled by Lys-20. Thr-23 serves as the catalytic Nucleophile. Glu-73 serves as the catalytic Proton donor.

The protein belongs to the N(4)-acetylcytidine amidohydrolase family.

It carries out the reaction N(4)-acetylcytidine + H2O = cytidine + acetate + H(+). It catalyses the reaction N(4)-acetyl-2'-deoxycytidine + H2O = 2'-deoxycytidine + acetate + H(+). The enzyme catalyses N(4)-acetylcytosine + H2O = cytosine + acetate + H(+). In terms of biological role, catalyzes the hydrolysis of N(4)-acetylcytidine (ac4C). The polypeptide is N(4)-acetylcytidine amidohydrolase (Moritella marina (Vibrio marinus)).